We begin with the raw amino-acid sequence, 275 residues long: Digeranylgeranylglyceryl phosphate synthase (275 aa).

8 helical membrane-spanning segments follow: residues 12–32 (VHNV…ATTW), 35–55 (TPLF…GYVI), 88–108 (IVLF…PFGF), 125–145 (KLGL…AYYG), 146–166 (GLAS…IFFF), 200–220 (WIIA…PYFL), 224–244 (VIYL…LILH), and 255–275 (SLMK…SLRI).

Belongs to the UbiA prenyltransferase family. DGGGP synthase subfamily. Mg(2+) is required as a cofactor.

Its subcellular location is the cell membrane. It catalyses the reaction sn-3-O-(geranylgeranyl)glycerol 1-phosphate + (2E,6E,10E)-geranylgeranyl diphosphate = 2,3-bis-O-(geranylgeranyl)-sn-glycerol 1-phosphate + diphosphate. It participates in membrane lipid metabolism; glycerophospholipid metabolism. In terms of biological role, prenyltransferase that catalyzes the transfer of the geranylgeranyl moiety of geranylgeranyl diphosphate (GGPP) to the C2 hydroxyl of (S)-3-O-geranylgeranylglyceryl phosphate (GGGP). This reaction is the second ether-bond-formation step in the biosynthesis of archaeal membrane lipids. The polypeptide is Digeranylgeranylglyceryl phosphate synthase (Sulfolobus acidocaldarius (strain ATCC 33909 / DSM 639 / JCM 8929 / NBRC 15157 / NCIMB 11770)).